A 608-amino-acid polypeptide reads, in one-letter code: Threonine--tRNA ligase (608 aa).

Positions 1–145 (MKTLLIHAKH…TIKPGRRVRP (145 aa)) are editing domain. Catalytic stretches follow at residues 192-489 (PKYL…PSLP) and 193-489 (KYLE…PSLP). The Zn(2+) site is built by C286, H337, and H458.

The protein belongs to the class-II aminoacyl-tRNA synthetase family. In terms of assembly, homodimer. It depends on Zn(2+) as a cofactor.

The protein localises to the cytoplasm. It carries out the reaction tRNA(Thr) + L-threonine + ATP = L-threonyl-tRNA(Thr) + AMP + diphosphate + H(+). Its function is as follows. Catalyzes the attachment of threonine to tRNA(Thr) in a two-step reaction: L-threonine is first activated by ATP to form Thr-AMP and then transferred to the acceptor end of tRNA(Thr). Also edits incorrectly charged L-seryl-tRNA(Thr). The sequence is that of Threonine--tRNA ligase from Thermofilum pendens (strain DSM 2475 / Hrk 5).